A 346-amino-acid chain; its full sequence is MKQIINPLKRNSNKIPIWFMRQAGRYLPEYKKVREKTKNFLDFCYDVNKATEVTLQPIKRYGFDAAIIFSDILVLPHALGWEVDFKENIGPILKQFKSQEDFKYLQSNPNNKLEKVYEIIKKVKEELPSTTSLIGFAGSPWTVMSYMLEGKGKQDFKTSKKFIYENKILAKELLNFITEKTADHLVNQAKSGADVLKLFDSWSGVLGEEEFTEFVIEPTKKIILKVKEDFPKIPIIAFPKGAVLLYEKFIKEVPIDILAVDQMVPLEKMKEWSDKVIVQGNLDPVVLLTNKEIIKEKAYKILQTMKGKNFIFNLGHGILPETPPENVKFLTEYVRLYEEKNSNSTF.

Substrate-binding positions include 21–25 (RQAGR), Phe40, Asp71, Tyr146, Ser201, and His316.

This sequence belongs to the uroporphyrinogen decarboxylase family. In terms of assembly, homodimer.

Its subcellular location is the cytoplasm. It carries out the reaction uroporphyrinogen III + 4 H(+) = coproporphyrinogen III + 4 CO2. It participates in porphyrin-containing compound metabolism; protoporphyrin-IX biosynthesis; coproporphyrinogen-III from 5-aminolevulinate: step 4/4. Its function is as follows. Catalyzes the decarboxylation of four acetate groups of uroporphyrinogen-III to yield coproporphyrinogen-III. The chain is Uroporphyrinogen decarboxylase from Rickettsia felis (strain ATCC VR-1525 / URRWXCal2) (Rickettsia azadi).